We begin with the raw amino-acid sequence, 191 residues long: Orotate phosphoribosyltransferase (191 aa).

Residue 114–122 (EDVVTTGKS) coordinates 5-phospho-alpha-D-ribose 1-diphosphate. Residues T118 and R146 each coordinate orotate.

Belongs to the purine/pyrimidine phosphoribosyltransferase family. PyrE subfamily. As to quaternary structure, homodimer. The cofactor is Mg(2+).

It carries out the reaction orotidine 5'-phosphate + diphosphate = orotate + 5-phospho-alpha-D-ribose 1-diphosphate. The protein operates within pyrimidine metabolism; UMP biosynthesis via de novo pathway; UMP from orotate: step 1/2. Its function is as follows. Catalyzes the transfer of a ribosyl phosphate group from 5-phosphoribose 1-diphosphate to orotate, leading to the formation of orotidine monophosphate (OMP). The chain is Orotate phosphoribosyltransferase from Clostridium botulinum (strain ATCC 19397 / Type A).